A 387-amino-acid polypeptide reads, in one-letter code: Patatin group J-1 (387 aa).

Positions 1–23 (MATTKSFLILIVMILATTSSTFA) are cleaved as a signal peptide. Positions 32–230 (LSIDGGGIKG…TVGDPALLSL (199 aa)) constitute a PNPLA domain. A GXGXXG motif is present at residues 36 to 41 (GGGIKG). The short motif at 75–79 (GTSTG) is the GXSXG element. The active-site Nucleophile is S77. N-linked (GlcNAc...) asparagine glycosylation is present at N115. Catalysis depends on D216, which acts as the Proton acceptor. The short motif at 216–218 (DGG) is the DGA/G element. Residues 322–385 (ENALTGTTTE…NRKKLRANKA (64 aa)) adopt a coiled-coil conformation.

Belongs to the patatin family. In terms of tissue distribution, tuber.

It is found in the vacuole. In terms of biological role, probable lipolytic acyl hydrolase (LAH), an activity which is thought to be involved in the response of tubers to pathogens. This is Patatin group J-1 from Solanum tuberosum (Potato).